Here is a 510-residue protein sequence, read N- to C-terminus: ATP synthase subunit alpha (510 aa).

169 to 176 is a binding site for ATP; it reads GDRQTGKT.

This sequence belongs to the ATPase alpha/beta chains family. In terms of assembly, F-type ATPases have 2 components, CF(1) - the catalytic core - and CF(0) - the membrane proton channel. CF(1) has five subunits: alpha(3), beta(3), gamma(1), delta(1), epsilon(1). CF(0) has four main subunits: a(1), b(1), b'(1) and c(9-12).

The protein localises to the cell inner membrane. It catalyses the reaction ATP + H2O + 4 H(+)(in) = ADP + phosphate + 5 H(+)(out). Its function is as follows. Produces ATP from ADP in the presence of a proton gradient across the membrane. The alpha chain is a regulatory subunit. The polypeptide is ATP synthase subunit alpha (Rhodopseudomonas palustris (strain BisB5)).